The following is a 448-amino-acid chain: Exodeoxyribonuclease 7 large subunit (448 aa).

Belongs to the XseA family. As to quaternary structure, heterooligomer composed of large and small subunits.

The protein localises to the cytoplasm. The catalysed reaction is Exonucleolytic cleavage in either 5'- to 3'- or 3'- to 5'-direction to yield nucleoside 5'-phosphates.. Bidirectionally degrades single-stranded DNA into large acid-insoluble oligonucleotides, which are then degraded further into small acid-soluble oligonucleotides. The sequence is that of Exodeoxyribonuclease 7 large subunit from Shewanella baltica (strain OS155 / ATCC BAA-1091).